The following is a 159-amino-acid chain: Phosphopantetheine adenylyltransferase (159 aa).

Residue serine 8 participates in substrate binding. ATP is bound by residues serine 8–phenylalanine 9 and histidine 16. Substrate-binding residues include lysine 40, valine 72, and arginine 86. ATP-binding positions include glycine 87–arginine 89, glutamate 97, and tyrosine 122–serine 128.

It belongs to the bacterial CoaD family. Homohexamer. Mg(2+) serves as cofactor.

It is found in the cytoplasm. It carries out the reaction (R)-4'-phosphopantetheine + ATP + H(+) = 3'-dephospho-CoA + diphosphate. It participates in cofactor biosynthesis; coenzyme A biosynthesis; CoA from (R)-pantothenate: step 4/5. Reversibly transfers an adenylyl group from ATP to 4'-phosphopantetheine, yielding dephospho-CoA (dPCoA) and pyrophosphate. This Treponema pallidum (strain Nichols) protein is Phosphopantetheine adenylyltransferase.